The chain runs to 421 residues: Solute carrier family 35 member F3 (421 aa).

The disordered stretch occupies residues 25–53 (EGEERPREPPGPAEAQAPAGTEAGGRTSR). Residues 37–49 (AEAQAPAGTEAGG) are compositionally biased toward low complexity. The next 10 helical transmembrane spans lie at 66–86 (VFWG…STQL), 98–118 (FTLT…YYAG), 149–169 (VFFT…YLYL), 179–199 (DVSV…WIVL), 208–228 (IVAA…DGFH), 232–252 (VIGI…KVLF), 266–286 (LFLS…PVIL), 305–325 (LCGF…GIAV), 326–346 (TYPT…AVVD), and 352–372 (IVFN…FLLL). Residues 394–421 (KEETAESSGDLGTGPQSRSRRARPSFAR) are disordered. The segment covering 411-421 (RSRRARPSFAR) has biased composition (basic residues).

The protein belongs to the SLC35F solute transporter family.

It localises to the membrane. The enzyme catalyses thiamine(in) = thiamine(out). Its function is as follows. Mediates thiamine transport. This Mus musculus (Mouse) protein is Solute carrier family 35 member F3 (Slc35f3).